Consider the following 117-residue polypeptide: Large ribosomal subunit protein bL20 (117 aa).

This sequence belongs to the bacterial ribosomal protein bL20 family.

In terms of biological role, binds directly to 23S ribosomal RNA and is necessary for the in vitro assembly process of the 50S ribosomal subunit. It is not involved in the protein synthesizing functions of that subunit. This is Large ribosomal subunit protein bL20 from Aliivibrio salmonicida (strain LFI1238) (Vibrio salmonicida (strain LFI1238)).